The sequence spans 483 residues: UDP-N-acetylmuramoyl-L-alanyl-D-glutamate--2,6-diaminopimelate ligase (483 aa).

Residue Ser-30 participates in UDP-N-acetyl-alpha-D-muramoyl-L-alanyl-D-glutamate binding. Position 109 to 115 (109 to 115) interacts with ATP; it reads GTNGKTT. Residues 151-152, Ser-178, and Arg-186 contribute to the UDP-N-acetyl-alpha-D-muramoyl-L-alanyl-D-glutamate site; that span reads TT. Residue Lys-218 is modified to N6-carboxylysine. Meso-2,6-diaminopimelate-binding positions include Arg-380, 403 to 406, Gly-453, and Glu-457; that span reads DNPR. A Meso-diaminopimelate recognition motif motif is present at residues 403–406; the sequence is DNPR.

This sequence belongs to the MurCDEF family. MurE subfamily. Mg(2+) serves as cofactor. In terms of processing, carboxylation is probably crucial for Mg(2+) binding and, consequently, for the gamma-phosphate positioning of ATP.

It localises to the cytoplasm. The enzyme catalyses UDP-N-acetyl-alpha-D-muramoyl-L-alanyl-D-glutamate + meso-2,6-diaminopimelate + ATP = UDP-N-acetyl-alpha-D-muramoyl-L-alanyl-gamma-D-glutamyl-meso-2,6-diaminopimelate + ADP + phosphate + H(+). Its pathway is cell wall biogenesis; peptidoglycan biosynthesis. In terms of biological role, catalyzes the addition of meso-diaminopimelic acid to the nucleotide precursor UDP-N-acetylmuramoyl-L-alanyl-D-glutamate (UMAG) in the biosynthesis of bacterial cell-wall peptidoglycan. The protein is UDP-N-acetylmuramoyl-L-alanyl-D-glutamate--2,6-diaminopimelate ligase of Chlamydia muridarum (strain MoPn / Nigg).